Consider the following 267-residue polypeptide: MGLFDRLGRVVRANLNDLVSKAEDPEKVLEQAVIDMQEDLVQLRQAVARTIAEEKRTEQRLNQDTQEAKKWEDRAKLALTNGEENLAREALARKKSLTDTAAAYQTQLAQQRTMSENLRRNLAALEAKISEAKTKKNMLQARAKAAKANAELQQTLGGLGTSSATSAFERMENKVLDMEATSQAAGELAGFGIENQFAQLEASSGVEDELAALKASMAGGALPGTSAATPQLEAAPVDSSVPANNASQDDAVIDQELDDLRRRLNNL.

Positions 26 to 156 (EKVLEQAVID…KANAELQQTL (131 aa)) form a coiled coil. The segment at 224–252 (GTSAATPQLEAAPVDSSVPANNASQDDAV) is disordered.

It belongs to the PspA/Vipp/IM30 family.

The protein localises to the cell inner membrane. Required for thylakoid formation. This Synechocystis sp. (strain ATCC 27184 / PCC 6803 / Kazusa) protein is Membrane-associated protein Vipp1.